Here is a 551-residue protein sequence, read N- to C-terminus: Solute carrier family 22 member 3 (551 aa).

A helical transmembrane segment spans residues 21-41; sequence VFLLLCLTGVTFAFLFVGVVF. N-linked (GlcNAc...) asparagine glycosylation is found at asparagine 72, asparagine 99, and asparagine 114. A helical membrane pass occupies residues 177–197; the sequence is LIVYLISCFGVGITGVVVAFA. The N-linked (GlcNAc...) asparagine glycan is linked to asparagine 199. 2 helical membrane-spanning segments follow: residues 236–256 and 264–284; these read IVGIVIQMFFTLGIIILPGIA and GIQLAISLPSFLFLLYYWVVP. The short motif at 284–288 is the Proline-rich sequence element; that stretch reads PESPR. N-linked (GlcNAc...) asparagine glycosylation occurs at asparagine 317. The next 3 helical transmembrane spans lie at 376-396, 463-483, and 493-513; these read MDFFISGLVELPGALLILLTI, FGVSLCSGLCDFGGIIAPFLL, and LPLIIFGILASVCGGLVMLLP.

It belongs to the major facilitator (TC 2.A.1) superfamily. Organic cation transporter (TC 2.A.1.19) family. As to expression, highly expressed in placenta. Expressed in intestine, hear, kidney and lung. Widely expressed in brain, particularly in hippocampus, cerebellum, cerebral cortex. In the brain, expressed predominantly in regions located at the brain-cerebrospinal fluid border, with expression extending to regions that belong to monoaminergic pathways such as raphe nuclei, striatum and thalamus. In brain, expressed in neurons and glial cells of amygdala. Expression is low in kidney and lung and undetectable in liver. Expressed in Sertoli cells in testis. Expressed in tracheal and bronchial epithelium of the respiratory tract, where it localizes to the apical membrane of ciliated and brush cells, and in basal cells.

The protein localises to the cell membrane. The protein resides in the apical cell membrane. It is found in the basolateral cell membrane. Its subcellular location is the mitochondrion membrane. It localises to the endomembrane system. The protein localises to the nucleus membrane. The protein resides in the nucleus outer membrane. The catalysed reaction is (R)-noradrenaline(out) = (R)-noradrenaline(in). It catalyses the reaction (R)-adrenaline(out) = (R)-adrenaline(in). It carries out the reaction serotonin(out) = serotonin(in). The enzyme catalyses dopamine(out) = dopamine(in). The catalysed reaction is histamine(out) = histamine(in). It catalyses the reaction tyramine(in) = tyramine(out). It carries out the reaction guanidine(out) = guanidine(in). The enzyme catalyses agmatine(out) = agmatine(in). The catalysed reaction is spermidine(in) = spermidine(out). It catalyses the reaction L-histidyl-L-proline diketopiperazine(in) = L-histidyl-L-proline diketopiperazine(out). It carries out the reaction (R)-salsolinol(in) = (R)-salsolinol(out). Its function is as follows. Electrogenic voltage-dependent transporter that mediates the transport of a variety of organic cations such as endogenous bioactive amines, cationic drugs and xenobiotics. Cation cellular uptake or release is driven by the electrochemical potential, i.e. membrane potential and concentration gradient. Functions as a Na(+)- and Cl(-)-independent, bidirectional uniporter. Implicated in neuronal monoamine neurotransmitters cellular uptake such as dopamine, adrenaline/epinephrine, noradrenaline/norepinephrine, histamine, serotonin and tyramine, thereby supporting a role in homeostatic regulation of aminergic neurotransmission in the brain. Transports dopaminergic neuromodulators cyclo(his-pro) and salsolinol with low efficiency. May be involved in the uptake and disposition of cationic compounds by renal clearance from the blood flow. May contribute to regulate the transport of cationic compounds in testis across the blood-testis-barrier. Mediates the transport of polyamine spermidine and putrescine. Mediates the bidirectional transport of polyamine agmatine. Also transports guanidine. May also mediate intracellular transport of organic cations, thereby playing a role in amine metabolism and intracellular signaling. In Rattus norvegicus (Rat), this protein is Solute carrier family 22 member 3.